The primary structure comprises 62 residues: Large ribosomal subunit protein bL33 (62 aa).

The protein belongs to the bacterial ribosomal protein bL33 family.

The sequence is that of Large ribosomal subunit protein bL33 from Bacteroides thetaiotaomicron (strain ATCC 29148 / DSM 2079 / JCM 5827 / CCUG 10774 / NCTC 10582 / VPI-5482 / E50).